Reading from the N-terminus, the 994-residue chain is Phosphoenolpyruvate carboxylase (994 aa).

Positions 1 to 66 are disordered; it reads MKSSGSARAT…QGRTREDKDR (66 aa). 2 stretches are compositionally biased toward low complexity: residues 14–25 and 41–54; these read AVSSSSAPAHAE and AAAR…AASA. Residues histidine 204 and lysine 646 contribute to the active site.

It belongs to the PEPCase type 1 family. Requires Mg(2+) as cofactor.

The enzyme catalyses oxaloacetate + phosphate = phosphoenolpyruvate + hydrogencarbonate. Its function is as follows. Forms oxaloacetate, a four-carbon dicarboxylic acid source for the tricarboxylic acid cycle. This Burkholderia pseudomallei (strain 668) protein is Phosphoenolpyruvate carboxylase.